The following is a 182-amino-acid chain: CDP-diacylglycerol--glycerol-3-phosphate 3-phosphatidyltransferase (182 aa).

Topologically, residues 1-12 are cytoplasmic; it reads MQLNIPTWLTLF. A helical membrane pass occupies residues 13 to 37; sequence RVVLIPFFVLAFYLPFVWAPMVCAI. Over 38–60 the chain is Periplasmic; the sequence is IFVFAAATDWFDGFLARRWKQTT. The helical transmembrane segment at 61-81 threads the bilayer; it reads RFGAFLDPVADKVMVAVALVL. Over 82 to 86 the chain is Cytoplasmic; it reads VAEHY. Residues 87-107 traverse the membrane as a helical segment; that stretch reads HSWWITLPAATMIAREIIISS. At 108–145 the chain is on the periplasmic side; that stretch reads LREWMAEIGKRSSVAVSWVGKVKTMAQMGSLVGLLWRP. The chain crosses the membrane as a helical span at residues 146–168; that stretch reads DHNVELASFVLLYIAAVLTFWSM. Residues 169-181 are Cytoplasmic-facing; that stretch reads FQYLNAAWSDLLE.

Belongs to the CDP-alcohol phosphatidyltransferase class-I family.

Its subcellular location is the cell inner membrane. The catalysed reaction is a CDP-1,2-diacyl-sn-glycerol + sn-glycerol 3-phosphate = a 1,2-diacyl-sn-glycero-3-phospho-(1'-sn-glycero-3'-phosphate) + CMP + H(+). It participates in phospholipid metabolism; phosphatidylglycerol biosynthesis; phosphatidylglycerol from CDP-diacylglycerol: step 1/2. Its function is as follows. Catalyzes the conversion of cytidine diphosphate diacylglycerol (CDP-DG) and glycerol 3-phosphate into phosphatidylglycerol. Essential for the synthesis of anionic phospholipids, thereby playing a role in balancing the ratio of zwitterionic and anionic phospholipids, which is thought to be important for normal membrane function. The sequence is that of CDP-diacylglycerol--glycerol-3-phosphate 3-phosphatidyltransferase from Yersinia pestis bv. Antiqua (strain Antiqua).